The sequence spans 92 residues: uncharacterized protein (92 aa).

Residues 65–86 (AVWIFWLCFLVSGLSRAFLVYF) traverse the membrane as a helical segment.

Its subcellular location is the membrane. This is an uncharacterized protein from Treponema pallidum (strain Nichols).